The chain runs to 178 residues: Small ribosomal subunit protein uS5 (178 aa).

The 64-residue stretch at 15-78 (FEEKIIEIRR…ADAKKNVIEV (64 aa)) folds into the S5 DRBM domain.

Belongs to the universal ribosomal protein uS5 family. Part of the 30S ribosomal subunit. Contacts proteins S4 and S8.

In terms of biological role, with S4 and S12 plays an important role in translational accuracy. Its function is as follows. Located at the back of the 30S subunit body where it stabilizes the conformation of the head with respect to the body. This chain is Small ribosomal subunit protein uS5, found in Thermotoga neapolitana (strain ATCC 49049 / DSM 4359 / NBRC 107923 / NS-E).